Here is a 244-residue protein sequence, read N- to C-terminus: Mannose-binding protein C (244 aa).

The first 18 residues, 1–18 (MSIFTSFLLLCVVTVVYA), serve as a signal peptide directing secretion. The Collagen-like domain maps to 38-96 (GLNGFPGKDGRDGAKGEKGEPGQGLRGLQGPPGKVGPTGPPGNPGLKGAVGPKGDRGDR). The interval 40 to 101 (NGFPGKDGRD…DRGDRAEFDT (62 aa)) is disordered. 4-hydroxyproline is present on P43. Over residues 45 to 57 (KDGRDGAKGEKGE) the composition is skewed to basic and acidic residues. 4-hydroxyproline is present on residues P58, P69, P78, and P81. Residues 65–74 (LQGPPGKVGP) show a composition bias toward low complexity. Residues 90 to 99 (KGDRGDRAEF) show a composition bias toward basic and acidic residues. A coiled-coil region spans residues 108-126 (IAALRSELRALRNWVLFSL). The C-type lectin domain occupies 129–241 (KVGKKYFVSS…CSDSFLAICE (113 aa)). 2 disulfide bridges follow: C151–C240 and C218–C232. N210 is a glycosylation site (N-linked (GlcNAc...) asparagine).

As to quaternary structure, oligomeric complex of 3 or more homotrimers. Interacts with MASP1 and MASP2. Interacts with MEP1A and MEP1B and may inhibit their catalytic activity. Post-translationally, hydroxylation on proline residues within the sequence motif, GXPG, is most likely to be 4-hydroxy as this fits the requirement for 4-hydroxylation in vertebrates.

The protein resides in the secreted. Calcium-dependent lectin involved in innate immune defense. Binds mannose, fucose and N-acetylglucosamine on different microorganisms and activates the lectin complement pathway. Binds to late apoptotic cells, as well as to apoptotic blebs and to necrotic cells, but not to early apoptotic cells, facilitating their uptake by macrophages. The polypeptide is Mannose-binding protein C (Mbl2) (Mus musculus (Mouse)).